Reading from the N-terminus, the 317-residue chain is COP9 signalosome complex subunit 6a (317 aa).

The 135-residue stretch at 30-164 folds into the MPN domain; the sequence is TQLNPPASIC…VTIYESELHV (135 aa).

It belongs to the peptidase M67A family. CSN6 subfamily. In terms of assembly, component of the CSN complex, probably composed of CSN1, CSN2, CSN3, CSN4, CSN5 (CSN5A or CSN5B), CSN6 (CSN6A or CSN6B), CSN7 and CSN8. Interacts with itself. In the complex, it probably interacts directly with CSN4 and CSN5A or CSN5B. Interacts with CSN7 (via C-terminal tail). Binds to the translation initiation factors TIF3E1.

The protein localises to the cytoplasm. It localises to the nucleus. Component of the COP9 signalosome complex (CSN), a complex involved in various cellular and developmental processes such as photomorphogenesis and auxin and jasmonate responses. The CSN complex is an essential regulator of the ubiquitin (Ubl) conjugation pathway by mediating the deneddylation of the cullin subunits of SCF-type E3 ligase complexes, leading to decrease the Ubl ligase activity of SCF. It is involved in repression of photomorphogenesis in darkness by regulating the activity of COP1-containing Ubl ligase complexes. The complex is also required for degradation of PSIAA6 by regulating the activity of the Ubl ligase SCF-TIR complex. Essential for the structural integrity of the CSN holocomplex. This is COP9 signalosome complex subunit 6a from Arabidopsis thaliana (Mouse-ear cress).